The following is a 395-amino-acid chain: S-adenosylmethionine synthase (395 aa).

His-16 provides a ligand contact to ATP. Residue Asp-18 coordinates Mg(2+). Residue Glu-44 participates in K(+) binding. Residues Glu-57 and Gln-100 each contribute to the L-methionine site. A flexible loop region spans residues 100 to 110 (QSPDIAQGVDD). ATP-binding positions include 174 to 176 (DAK), 241 to 242 (RF), Asp-250, 256 to 257 (RK), Ala-273, and Lys-277. Residue Asp-250 coordinates L-methionine. Position 281 (Lys-281) interacts with L-methionine.

It belongs to the AdoMet synthase family. Homotetramer; dimer of dimers. Mg(2+) is required as a cofactor. The cofactor is K(+).

Its subcellular location is the cytoplasm. The enzyme catalyses L-methionine + ATP + H2O = S-adenosyl-L-methionine + phosphate + diphosphate. It functions in the pathway amino-acid biosynthesis; S-adenosyl-L-methionine biosynthesis; S-adenosyl-L-methionine from L-methionine: step 1/1. Catalyzes the formation of S-adenosylmethionine (AdoMet) from methionine and ATP. The overall synthetic reaction is composed of two sequential steps, AdoMet formation and the subsequent tripolyphosphate hydrolysis which occurs prior to release of AdoMet from the enzyme. This is S-adenosylmethionine synthase from Levilactobacillus brevis (strain ATCC 367 / BCRC 12310 / CIP 105137 / JCM 1170 / LMG 11437 / NCIMB 947 / NCTC 947) (Lactobacillus brevis).